The following is a 265-amino-acid chain: Thiazole synthase (265 aa).

Residue lysine 107 is the Schiff-base intermediate with DXP of the active site. 1-deoxy-D-xylulose 5-phosphate-binding positions include glycine 168, 194 to 195, and 216 to 217; these read AG and NT.

Belongs to the ThiG family. As to quaternary structure, homotetramer. Forms heterodimers with either ThiH or ThiS.

The protein resides in the cytoplasm. It catalyses the reaction [ThiS sulfur-carrier protein]-C-terminal-Gly-aminoethanethioate + 2-iminoacetate + 1-deoxy-D-xylulose 5-phosphate = [ThiS sulfur-carrier protein]-C-terminal Gly-Gly + 2-[(2R,5Z)-2-carboxy-4-methylthiazol-5(2H)-ylidene]ethyl phosphate + 2 H2O + H(+). The protein operates within cofactor biosynthesis; thiamine diphosphate biosynthesis. In terms of biological role, catalyzes the rearrangement of 1-deoxy-D-xylulose 5-phosphate (DXP) to produce the thiazole phosphate moiety of thiamine. Sulfur is provided by the thiocarboxylate moiety of the carrier protein ThiS. In vitro, sulfur can be provided by H(2)S. In Pseudomonas aeruginosa (strain LESB58), this protein is Thiazole synthase.